The following is a 118-amino-acid chain: MARIAGVNIPDNKHTVISLTYIYGVGRTTAQKICATTGVNPAVKIKDLSDEQIEQLRGEVAKFTTEGDLRREINMKIKRLMDLGCYRGLRHRRGLPVRGQRTKTNARTRKGPRKPIRK.

A disordered region spans residues 93 to 118 (RGLPVRGQRTKTNARTRKGPRKPIRK).

It belongs to the universal ribosomal protein uS13 family. As to quaternary structure, part of the 30S ribosomal subunit. Forms a loose heterodimer with protein S19. Forms two bridges to the 50S subunit in the 70S ribosome.

Located at the top of the head of the 30S subunit, it contacts several helices of the 16S rRNA. In the 70S ribosome it contacts the 23S rRNA (bridge B1a) and protein L5 of the 50S subunit (bridge B1b), connecting the 2 subunits; these bridges are implicated in subunit movement. Contacts the tRNAs in the A and P-sites. The protein is Small ribosomal subunit protein uS13 of Pseudomonas syringae pv. tomato (strain ATCC BAA-871 / DC3000).